We begin with the raw amino-acid sequence, 110 residues long: Insulin (110 aa).

Positions 1-24 (MALWMRLLPLLALLALWAPAPTRA) are cleaved as a signal peptide. 3 cysteine pairs are disulfide-bonded: Cys-31–Cys-96, Cys-43–Cys-109, and Cys-95–Cys-100. Positions 57–87 (EVEDLQVRDVELAGAPGEGGLQPLALEGALQ) are cleaved as a propeptide — c peptide.

It belongs to the insulin family. As to quaternary structure, heterodimer of a B chain and an A chain linked by two disulfide bonds.

Its subcellular location is the secreted. Functionally, insulin decreases blood glucose concentration. It increases cell permeability to monosaccharides, amino acids and fatty acids. It accelerates glycolysis, the pentose phosphate cycle, and glycogen synthesis in liver. The polypeptide is Insulin (INS) (Canis lupus familiaris (Dog)).